The sequence spans 214 residues: Adenylate kinase (214 aa).

10-15 (GAGKGT) provides a ligand contact to ATP. The segment at 30–59 (STGDMLRAAVKAGTPLGLEAKKVMDAGQLV) is NMP. AMP-binding positions include Thr31, Arg36, 57–59 (QLV), 85–88 (GFPR), and Gln92. Residues 122–159 (GRRVHPGSGRVYHIVFNQPKVEGKDDVTGEDLAIRPDD) form an LID region. ATP is bound by residues Arg123 and 132–133 (VY). 2 residues coordinate AMP: Arg156 and Arg167. Position 200 (Gln200) interacts with ATP.

Belongs to the adenylate kinase family. As to quaternary structure, monomer.

It is found in the cytoplasm. The catalysed reaction is AMP + ATP = 2 ADP. Its pathway is purine metabolism; AMP biosynthesis via salvage pathway; AMP from ADP: step 1/1. Functionally, catalyzes the reversible transfer of the terminal phosphate group between ATP and AMP. Plays an important role in cellular energy homeostasis and in adenine nucleotide metabolism. The sequence is that of Adenylate kinase from Shewanella piezotolerans (strain WP3 / JCM 13877).